A 480-amino-acid polypeptide reads, in one-letter code: Cysteine--tRNA ligase (480 aa).

Residue C27 coordinates Zn(2+). Positions 29–39 (PTVYNYAHIGN) match the 'HIGH' region motif. Zn(2+)-binding residues include C221, H246, and E250. A 'KMSKS' region motif is present at residues 278–282 (KMSKS). K281 is a binding site for ATP.

This sequence belongs to the class-I aminoacyl-tRNA synthetase family. As to quaternary structure, monomer. The cofactor is Zn(2+).

It is found in the cytoplasm. It carries out the reaction tRNA(Cys) + L-cysteine + ATP = L-cysteinyl-tRNA(Cys) + AMP + diphosphate. In Borrelia garinii subsp. bavariensis (strain ATCC BAA-2496 / DSM 23469 / PBi) (Borreliella bavariensis), this protein is Cysteine--tRNA ligase.